The chain runs to 1221 residues: DNA-directed RNA polymerase subunit beta (1221 aa).

The segment at 1176 to 1221 is disordered; that stretch reads EKKKLAEEEAEIAAEAEAEGSAEEDAAEADADANEAETADDDKASK. Acidic residues predominate over residues 1183 to 1215; the sequence is EEAEIAAEAEAEGSAEEDAAEADADANEAETAD.

The protein belongs to the RNA polymerase beta chain family. As to quaternary structure, the RNAP catalytic core consists of 2 alpha, 1 beta, 1 beta' and 1 omega subunit. When a sigma factor is associated with the core the holoenzyme is formed, which can initiate transcription.

It carries out the reaction RNA(n) + a ribonucleoside 5'-triphosphate = RNA(n+1) + diphosphate. Its function is as follows. DNA-dependent RNA polymerase catalyzes the transcription of DNA into RNA using the four ribonucleoside triphosphates as substrates. The chain is DNA-directed RNA polymerase subunit beta from Lactobacillus delbrueckii subsp. bulgaricus (strain ATCC BAA-365 / Lb-18).